Here is a 262-residue protein sequence, read N- to C-terminus: Acyl-[acyl-carrier-protein]--UDP-N-acetylglucosamine O-acyltransferase (262 aa).

This sequence belongs to the transferase hexapeptide repeat family. LpxA subfamily. As to quaternary structure, homotrimer.

It is found in the cytoplasm. It carries out the reaction a (3R)-hydroxyacyl-[ACP] + UDP-N-acetyl-alpha-D-glucosamine = a UDP-3-O-[(3R)-3-hydroxyacyl]-N-acetyl-alpha-D-glucosamine + holo-[ACP]. Its pathway is glycolipid biosynthesis; lipid IV(A) biosynthesis; lipid IV(A) from (3R)-3-hydroxytetradecanoyl-[acyl-carrier-protein] and UDP-N-acetyl-alpha-D-glucosamine: step 1/6. Involved in the biosynthesis of lipid A, a phosphorylated glycolipid that anchors the lipopolysaccharide to the outer membrane of the cell. This Salmonella heidelberg (strain SL476) protein is Acyl-[acyl-carrier-protein]--UDP-N-acetylglucosamine O-acyltransferase.